A 253-amino-acid polypeptide reads, in one-letter code: Indole-3-glycerol phosphate synthase (253 aa).

The protein belongs to the TrpC family.

The catalysed reaction is 1-(2-carboxyphenylamino)-1-deoxy-D-ribulose 5-phosphate + H(+) = (1S,2R)-1-C-(indol-3-yl)glycerol 3-phosphate + CO2 + H2O. Its pathway is amino-acid biosynthesis; L-tryptophan biosynthesis; L-tryptophan from chorismate: step 4/5. In Bacillus cereus (strain ATCC 14579 / DSM 31 / CCUG 7414 / JCM 2152 / NBRC 15305 / NCIMB 9373 / NCTC 2599 / NRRL B-3711), this protein is Indole-3-glycerol phosphate synthase.